The sequence spans 607 residues: Replication factor C large subunit (607 aa).

G55–T62 is an ATP binding site. The segment at E468–F607 is disordered. Residues T506–N518 show a composition bias toward basic and acidic residues. Polar residues predominate over residues S548–K558.

It belongs to the activator 1 small subunits family. RfcL subfamily. As to quaternary structure, heteromultimer composed of small subunits (RfcS) and large subunits (RfcL).

In terms of biological role, part of the RFC clamp loader complex which loads the PCNA sliding clamp onto DNA. The protein is Replication factor C large subunit of Methanosarcina acetivorans (strain ATCC 35395 / DSM 2834 / JCM 12185 / C2A).